The sequence spans 1905 residues: Low-density lipoprotein receptor-related protein 4 (1905 aa).

The first 20 residues, 1–20 (MRRWWGALLLGALLCAHGTA), serve as a signal peptide directing secretion. Residues 21–1723 (SNLECACGRS…VPAAPGEGLH (1703 aa)) lie on the Extracellular side of the membrane. 8 consecutive LDL-receptor class A domains span residues 26 to 67 (ACGR…DGCT), 70 to 106 (TCSP…QDCP), 109 to 144 (ECEE…EQCD), 147 to 183 (KCSD…ESCP), 190 to 226 (PCNL…SDCS), 230 to 266 (PCRS…RNCT), 269 to 305 (MCTA…ENCE), and 311 to 350 (QCAS…QNCR). 30 disulfide bridges follow: Cys27–Cys44, Cys34–Cys57, Cys51–Cys66, Cys71–Cys83, Cys78–Cys96, Cys90–Cys105, Cys110–Cys122, Cys117–Cys135, Cys129–Cys143, Cys148–Cys160, Cys155–Cys173, Cys167–Cys182, Cys191–Cys203, Cys198–Cys216, Cys210–Cys225, Cys231–Cys243, Cys238–Cys256, Cys250–Cys265, Cys270–Cys282, Cys277–Cys295, Cys289–Cys304, Cys312–Cys324, Cys319–Cys337, Cys331–Cys349, Cys358–Cys369, Cys365–Cys378, Cys380–Cys393, Cys399–Cys409, Cys405–Cys418, and Cys420–Cys433. N-linked (GlcNAc...) asparagine glycosylation is present at Asn264. The EGF-like 1; atypical domain maps to 354 to 394 (GEENCNVNNGGCAQKCQMIRGAVQCTCHTGYRLTEDGRTCQ). Residues 395-434 (DVNECAEEGYCSQGCTNSEGAFQCWCEAGYELRPDRRSCK) enclose the EGF-like 2; calcium-binding domain. LDL-receptor class B repeat units lie at residues 480–522 (ELVF…DWVH), 523–565 (DKLY…HPME), 566–609 (GTIY…DYAG), 610–652 (RRMY…FEDS), and 653–693 (LYWT…LHPQ). An N-linked (GlcNAc...) asparagine glycan is attached at Asn498. Residues 698–737 (GKNRCGDNNGGCTHLCLPSGQNYTCACPTGFRKINSHACA) form the EGF-like 3 domain. Intrachain disulfides connect Cys702-Cys713, Cys709-Cys722, and Cys724-Cys736. Asn719 is a glycosylation site (N-linked (GlcNAc...) asparagine). LDL-receptor class B repeat units follow at residues 785–827 (DHVY…DWVT), 828–870 (NKLY…EPMG), 871–914 (GYMY…DYGS), 915–956 (QRLY…LYGQ), and 957–998 (RIYW…FHRQ). Asn901 carries an N-linked (GlcNAc...) asparagine glycan. A glycan (N-linked (GlcNAc...) asparagine) is linked at Asn1077. 10 LDL-receptor class B repeats span residues 1093–1135 (GKVY…DAIG), 1136–1178 (RKVY…YHEM), 1179–1222 (GFMY…DKTS), 1223–1263 (SQLL…LLDS), 1264–1306 (YIYW…DRAQ), 1397–1439 (GKVY…DWVA), 1440–1482 (RNLY…FPRK), 1483–1526 (GYLF…DYDT), 1527–1568 (RRIY…QDRW), and 1569–1610 (IYWT…SPQR). 2 N-linked (GlcNAc...) asparagine glycosylation sites follow: Asn1415 and Asn1467. Residues 1659-1696 (PRATSLNEKSPVLPNTLPTTLHSSTTRTRTSPEGAEGR) are disordered. A compositionally biased stretch (low complexity) spans 1671-1690 (LPNTLPTTLHSSTTRTRTSP). The helical transmembrane segment at 1724–1746 (VSYAVGGLLSVLLILLVTAALML) threads the bilayer. The Cytoplasmic portion of the chain corresponds to 1747–1905 (YRHRKSKFTD…ERKLSSESQV (159 aa)). The segment at 1853–1905 (SSGSLDDTETEQLLQEEQSECSSVHTATTPERRGSLPDTGWKHERKLSSESQV) is disordered. Polar residues predominate over residues 1872 to 1881 (ECSSVHTATT). The segment covering 1882–1905 (PERRGSLPDTGWKHERKLSSESQV) has biased composition (basic and acidic residues).

The protein belongs to the LDLR family. In terms of assembly, homooligomer. Interacts with MUSK; the heterodimer forms an AGRIN receptor complex that binds AGRIN resulting in activation of MUSK. Interacts (via the extracellular domain) with SOST; the interaction facilitates the inhibition of Wnt signaling. Interacts with MESD; the interaction promotes glycosylation of LRP4 and its cell-surface expression. In terms of processing, N-glycosylation is required for cell surface location. Expressed in different regions of the brain, mainly in the olfactory bulb, at lower level in the cerebral cortex and hippocampus.

It localises to the cell membrane. Its function is as follows. Mediates SOST-dependent inhibition of bone formation. Functions as a specific facilitator of SOST-mediated inhibition of Wnt signaling. Plays a key role in the formation and the maintenance of the neuromuscular junction (NMJ), the synapse between motor neuron and skeletal muscle. Directly binds AGRIN and recruits it to the MUSK signaling complex. Mediates the AGRIN-induced phosphorylation of MUSK, the kinase of the complex. The activation of MUSK in myotubes induces the formation of NMJ by regulating different processes including the transcription of specific genes and the clustering of AChR in the postsynaptic membrane. Alternatively, may be involved in the negative regulation of the canonical Wnt signaling pathway, being able to antagonize the LRP6-mediated activation of this pathway. More generally, has been proposed to function as a cell surface endocytic receptor binding and internalizing extracellular ligands for degradation by lysosomes. Plays an essential role in the process of digit differentiation. This Rattus norvegicus (Rat) protein is Low-density lipoprotein receptor-related protein 4 (Lrp4).